The sequence spans 365 residues: L-lactate oxidase (365 aa).

An FMN hydroxy acid dehydrogenase domain is found at 6-365; that stretch reads RIPPGVWNAI…ITHDTLTPSC (360 aa). Tyr32 contacts pyruvate. Residues 85 to 87, Ser114, and Gln135 contribute to the FMN site; that span reads PVA. A pyruvate-binding site is contributed by Tyr137. Residues Thr163, Lys237, and Ser259 each coordinate FMN. The pyruvate site is built by His261 and Arg264. The active-site Proton acceptor is the His261. FMN is bound by residues 292–296 and Arg316; that span reads DGGVR.

The protein belongs to the FMN-dependent alpha-hydroxy acid dehydrogenase family. As to quaternary structure, homotetramer. It depends on FMN as a cofactor.

It catalyses the reaction (S)-lactate + O2 = pyruvate + H2O2. The catalysed reaction is glycolate + O2 = glyoxylate + H2O2. Catalyzes the oxidation of (S)-lactate (L-lactate) to pyruvate, with a reduction of O2 to H2O2. To a lesser extent is also able to use glycolate as substrate. In Alicycliphilus denitrificans (strain DSM 14773 / CIP 107495 / K601), this protein is L-lactate oxidase.